The following is a 505-amino-acid chain: 2-isopropylmalate synthase (505 aa).

The region spanning 5-269 (IKIFDTTLRD…ETGIHTEYLY (265 aa)) is the Pyruvate carboxyltransferase domain. Residues aspartate 14, histidine 204, histidine 206, and asparagine 240 each coordinate Mn(2+). The segment at 393-505 (SLLYFHTFTG…AVNRFELRKR (113 aa)) is regulatory domain.

Belongs to the alpha-IPM synthase/homocitrate synthase family. LeuA type 1 subfamily. As to quaternary structure, homodimer. Mn(2+) serves as cofactor.

It localises to the cytoplasm. It catalyses the reaction 3-methyl-2-oxobutanoate + acetyl-CoA + H2O = (2S)-2-isopropylmalate + CoA + H(+). It participates in amino-acid biosynthesis; L-leucine biosynthesis; L-leucine from 3-methyl-2-oxobutanoate: step 1/4. Functionally, catalyzes the condensation of the acetyl group of acetyl-CoA with 3-methyl-2-oxobutanoate (2-ketoisovalerate) to form 3-carboxy-3-hydroxy-4-methylpentanoate (2-isopropylmalate). The polypeptide is 2-isopropylmalate synthase (Sediminispirochaeta smaragdinae (strain DSM 11293 / JCM 15392 / SEBR 4228) (Spirochaeta smaragdinae)).